A 720-amino-acid chain; its full sequence is Pro-neuregulin-3, membrane-bound isoform (720 aa).

At 1-360 (MSEGAAAASP…MESEEVYQRQ (360 aa)) the chain is on the extracellular side. Disordered stretches follow at residues 28 to 48 (AAAA…AAEP), 119 to 223 (SSFP…AMPS), and 246 to 280 (PFQD…TTYS). Over residues 34 to 44 (AGGGPDGGGEG) the composition is skewed to gly residues. A compositionally biased stretch (low complexity) spans 127-148 (TTTTTTSTTSPATPSAGGAASS). Polar residues predominate over residues 149–163 (RTPNRISTRLTTITR). Low complexity-rich tracts occupy residues 187-205 (TAAP…SSST) and 250-271 (AASS…TSTS). In terms of domain architecture, EGF-like spans 286 to 329 (HFKPCRDKDLAYCLNDGECFVIETLTGSHKHCRCKEGYQGVRCD). 3 cysteine pairs are disulfide-bonded: C290/C304, C298/C317, and C319/C328. The helical transmembrane segment at 361–381 (VLSISCIIFGIVIVGMFCAAF) threads the bilayer. Residues 382–720 (YFKSKKQAKQ…EIQRDSALTK (339 aa)) are Cytoplasmic-facing. Residues 451 to 481 (PQSFPEVPSPDRGSQSVKHHRSLSSCCSPGQ) are disordered.

It belongs to the neuregulin family. In terms of assembly, interacts with ERBB4. Post-translationally, proteolytic cleavage close to the plasma membrane on the external face leads to the release of the soluble growth factor form. In terms of processing, extensive glycosylation precedes the proteolytic cleavage. Isoform 3 is glycosylated. Highly expressed in most regions of the brain with the exception of corpus callosum. Expressed at lower level in testis. Not detected in heart, placenta, lung, liver, skeletal muscle, kidney, pancreas, spleen, thymus, prostate, ovary, small intestine, colon and peripheral blood leukocytes.

It is found in the cell membrane. The protein localises to the secreted. Its function is as follows. Direct ligand for the ERBB4 tyrosine kinase receptor. Binding results in ligand-stimulated tyrosine phosphorylation and activation of the receptor. Does not bind to the EGF receptor, ERBB2 or ERBB3 receptors. May be a survival factor for oligodendrocytes. The chain is Pro-neuregulin-3, membrane-bound isoform (NRG3) from Homo sapiens (Human).